A 134-amino-acid chain; its full sequence is Profilin-3 (134 aa).

Residues C13 and C118 are joined by a disulfide bond. The Involved in PIP2 interaction motif lies at 84-100 (AVIRGKKGSGGITIKKT). At T114 the chain carries Phosphothreonine.

Belongs to the profilin family. In terms of assembly, occurs in many kinds of cells as a complex with monomeric actin in a 1:1 ratio. In terms of processing, phosphorylated by MAP kinases.

Its subcellular location is the cytoplasm. It is found in the cytoskeleton. Binds to actin and affects the structure of the cytoskeleton. At high concentrations, profilin prevents the polymerization of actin, whereas it enhances it at low concentrations. This Olea europaea (Common olive) protein is Profilin-3.